Here is a 150-residue protein sequence, read N- to C-terminus: Protein SLM6 (150 aa).

The Extracellular segment spans residues 1–76 (MCSRFSSTSL…SLLRSGVFPS (76 aa)). A helical transmembrane segment spans residues 77–97 (WLFCMFSSILALAISNSFFFF). At 98–104 (SSNACFS) the chain is on the cytoplasmic side. A helical transmembrane segment spans residues 105–125 (LLFNSFLVTGFSFSADLLVLA). Over 126 to 150 (AAADTLESNVSNDIGGNCATRLFKL) the chain is Extracellular.

It is found in the membrane. In Saccharomyces cerevisiae (strain ATCC 204508 / S288c) (Baker's yeast), this protein is Protein SLM6.